The following is a 424-amino-acid chain: Serine--tRNA ligase (424 aa).

231-233 (TAE) is an L-serine binding site. ATP is bound by residues 262 to 264 (RRE) and V278. Residue E285 coordinates L-serine. 349–352 (EVSS) contributes to the ATP binding site. S384 serves as a coordination point for L-serine.

This sequence belongs to the class-II aminoacyl-tRNA synthetase family. Type-1 seryl-tRNA synthetase subfamily. Homodimer. The tRNA molecule binds across the dimer.

It is found in the cytoplasm. It carries out the reaction tRNA(Ser) + L-serine + ATP = L-seryl-tRNA(Ser) + AMP + diphosphate + H(+). The enzyme catalyses tRNA(Sec) + L-serine + ATP = L-seryl-tRNA(Sec) + AMP + diphosphate + H(+). Its pathway is aminoacyl-tRNA biosynthesis; selenocysteinyl-tRNA(Sec) biosynthesis; L-seryl-tRNA(Sec) from L-serine and tRNA(Sec): step 1/1. Catalyzes the attachment of serine to tRNA(Ser). Is also able to aminoacylate tRNA(Sec) with serine, to form the misacylated tRNA L-seryl-tRNA(Sec), which will be further converted into selenocysteinyl-tRNA(Sec). The sequence is that of Serine--tRNA ligase from Chlamydia abortus (strain DSM 27085 / S26/3) (Chlamydophila abortus).